A 201-amino-acid chain; its full sequence is Large ribosomal subunit protein uL4 (201 aa).

Positions 43 to 71 (TRAQKTRSDVSGGGKKPWRQKGTGRARSG) are disordered.

It belongs to the universal ribosomal protein uL4 family. Part of the 50S ribosomal subunit.

Its function is as follows. One of the primary rRNA binding proteins, this protein initially binds near the 5'-end of the 23S rRNA. It is important during the early stages of 50S assembly. It makes multiple contacts with different domains of the 23S rRNA in the assembled 50S subunit and ribosome. Forms part of the polypeptide exit tunnel. This Psychromonas ingrahamii (strain DSM 17664 / CCUG 51855 / 37) protein is Large ribosomal subunit protein uL4.